Reading from the N-terminus, the 289-residue chain is Pantothenate synthetase (289 aa).

An ATP-binding site is contributed by 30-37 (MGYLHEGH). Catalysis depends on His-37, which acts as the Proton donor. Gln-61 lines the (R)-pantoate pocket. Gln-61 contacts beta-alanine. Residue 147–150 (GLKD) participates in ATP binding. Residue Gln-153 coordinates (R)-pantoate. ATP contacts are provided by residues Val-176 and 184–187 (KSSR).

This sequence belongs to the pantothenate synthetase family. Homodimer.

It is found in the cytoplasm. The enzyme catalyses (R)-pantoate + beta-alanine + ATP = (R)-pantothenate + AMP + diphosphate + H(+). The protein operates within cofactor biosynthesis; (R)-pantothenate biosynthesis; (R)-pantothenate from (R)-pantoate and beta-alanine: step 1/1. In terms of biological role, catalyzes the condensation of pantoate with beta-alanine in an ATP-dependent reaction via a pantoyl-adenylate intermediate. The chain is Pantothenate synthetase from Geobacillus thermodenitrificans (strain NG80-2).